The primary structure comprises 445 residues: tRNA-2-methylthio-N(6)-dimethylallyladenosine synthase (445 aa).

Residues 4–121 (NKIYIKTWGC…LPNMIQEVKK (118 aa)) enclose the MTTase N-terminal domain. The [4Fe-4S] cluster site is built by cysteine 13, cysteine 50, cysteine 84, cysteine 158, cysteine 162, and cysteine 165. The region spanning 144–376 (RKPKVTAFVS…QTLIRNNTTM (233 aa)) is the Radical SAM core domain. The 64-residue stretch at 379 to 442 (QKMLGSIQSV…PNSLRGSYEK (64 aa)) folds into the TRAM domain.

This sequence belongs to the methylthiotransferase family. MiaB subfamily. In terms of assembly, monomer. The cofactor is [4Fe-4S] cluster.

It localises to the cytoplasm. The catalysed reaction is N(6)-dimethylallyladenosine(37) in tRNA + (sulfur carrier)-SH + AH2 + 2 S-adenosyl-L-methionine = 2-methylsulfanyl-N(6)-dimethylallyladenosine(37) in tRNA + (sulfur carrier)-H + 5'-deoxyadenosine + L-methionine + A + S-adenosyl-L-homocysteine + 2 H(+). Its function is as follows. Catalyzes the methylthiolation of N6-(dimethylallyl)adenosine (i(6)A), leading to the formation of 2-methylthio-N6-(dimethylallyl)adenosine (ms(2)i(6)A) at position 37 in tRNAs that read codons beginning with uridine. The polypeptide is tRNA-2-methylthio-N(6)-dimethylallyladenosine synthase (Buchnera aphidicola subsp. Baizongia pistaciae (strain Bp)).